Here is a 122-residue protein sequence, read N- to C-terminus: Large ribosomal subunit protein uL14 (122 aa).

Belongs to the universal ribosomal protein uL14 family. In terms of assembly, part of the 50S ribosomal subunit. Forms a cluster with proteins L3 and L19. In the 70S ribosome, L14 and L19 interact and together make contacts with the 16S rRNA in bridges B5 and B8.

In terms of biological role, binds to 23S rRNA. Forms part of two intersubunit bridges in the 70S ribosome. The protein is Large ribosomal subunit protein uL14 of Colwellia psychrerythraea (strain 34H / ATCC BAA-681) (Vibrio psychroerythus).